The sequence spans 480 residues: Probable histone deacetylase 1-B (480 aa).

The segment at 10-321 is histone deacetylase; it reads KVCYYYDGDV…WTYETAVALD (312 aa). H141 is an active-site residue. A disordered region spans residues 387–480; it reads DSVHDDSGEE…KRVKEETKSV (94 aa). Basic and acidic residues predominate over residues 401–416; it reads PDKRISIRSSDKRIAC. A compositionally biased stretch (acidic residues) spans 417-427; sequence DEEFSDSEDEG. The span at 443 to 480 shows a compositional bias: basic and acidic residues; that stretch reads VKTEEEKEGEDKKDVKEEEKAKDEKTDSKRVKEETKSV.

The protein belongs to the histone deacetylase family. HD type 1 subfamily. Found in a large complex with RBBP4 and MI-2.

It localises to the nucleus. The protein localises to the cytoplasm. The enzyme catalyses N(6)-acetyl-L-lysyl-[histone] + H2O = L-lysyl-[histone] + acetate. It catalyses the reaction N(6)-acetyl-L-lysyl-[protein] + H2O = L-lysyl-[protein] + acetate. It carries out the reaction N(6)-(2E)-butenoyl-L-lysyl-[protein] + H2O = (2E)-2-butenoate + L-lysyl-[protein]. Histone deacetylase that catalyzes the deacetylation of lysine residues on the N-terminal part of the core histones (H2A, H2B, H3 and H4). Histone deacetylation gives a tag for epigenetic repression and plays an important role in transcriptional regulation, cell cycle progression and developmental events. Histone deacetylases act via the formation of large multiprotein complexes. Also functions as a deacetylase for non-histone proteins. In addition to protein deacetylase activity, also has protein-lysine deacylase activity: acts as a protein decrotonylase by mediating decrotonylation ((2E)-butenoyl) of histones. The protein is Probable histone deacetylase 1-B (hdac1-b) of Xenopus laevis (African clawed frog).